A 406-amino-acid chain; its full sequence is MLTLLPSLILLLSTLSLSTPANAGAAIAKAYYPGWGSDDFPLSKVTWSKYTHLTYAFAKTTKDGGLTLEGSNPGGLKPFVKAAHENGVKACFSIGGWTGSQYFSTAVSTPEKRTAFVKTIVDFAKKYDADCIDLNWEYPAKQGIGCNTIDKDDTPHFLSFLEELHAATELPISAAVGIVPFNDAAGNPITDVSGFAKVFEHIVIMNYDVWGPWGSTVGPNAPLNDTCAAPANQQGSAVSAVNAWIKAGMPAEKIVLGVPAYGHGFTVKKEDAFQKGSTTKLAKYPPFDNKNRPNGDKWDDKAGKDVCGNDNPAGGIFTFWGMVDNGYLKEDGTPKVPHRFDDCSKTPYVYNPDKQIMISYDDAKSMDHKGHFIKNFGLAGFSLWNAAGDYHDILVDAVRHGAGFKN.

Residues 1–23 (MLTLLPSLILLLSTLSLSTPANA) form the signal peptide. Positions 26–405 (AIAKAYYPGW…DAVRHGAGFK (380 aa)) constitute a GH18 domain. Chitin is bound by residues Tyr138 and Trp384.

Belongs to the glycosyl hydrolase 18 family.

It localises to the secreted. Functionally, catalytically impaired chitinase that binds efficiently to chitin, but not to chitosan, xylan, or cellulose. Despite the lack of chitinolytic activity, retains substrate binding specificity and acts as an effector to prevent chitin-triggered immunity by sequestering immunogenic chitin fragments. This Moniliophthora roreri (Frosty pod rot fungus) protein is chitinase-like effector (Chi).